The primary structure comprises 229 residues: Enolase-phosphatase E1 (229 aa).

Residues aspartate 7 and glutamate 9 each contribute to the Mg(2+) site. Residues 122 to 123 (SS) and lysine 161 contribute to the substrate site. Aspartate 186 contacts Mg(2+).

This sequence belongs to the HAD-like hydrolase superfamily. MasA/MtnC family. In terms of assembly, monomer. It depends on Mg(2+) as a cofactor.

The protein localises to the cytoplasm. It is found in the nucleus. The enzyme catalyses 5-methylsulfanyl-2,3-dioxopentyl phosphate + H2O = 1,2-dihydroxy-5-(methylsulfanyl)pent-1-en-3-one + phosphate. The protein operates within amino-acid biosynthesis; L-methionine biosynthesis via salvage pathway; L-methionine from S-methyl-5-thio-alpha-D-ribose 1-phosphate: step 3/6. It functions in the pathway amino-acid biosynthesis; L-methionine biosynthesis via salvage pathway; L-methionine from S-methyl-5-thio-alpha-D-ribose 1-phosphate: step 4/6. Bifunctional enzyme that catalyzes the enolization of 2,3-diketo-5-methylthiopentyl-1-phosphate (DK-MTP-1-P) into the intermediate 2-hydroxy-3-keto-5-methylthiopentenyl-1-phosphate (HK-MTPenyl-1-P), which is then dephosphorylated to form the acireductone 1,2-dihydroxy-3-keto-5-methylthiopentene (DHK-MTPene). The protein is Enolase-phosphatase E1 of Clavispora lusitaniae (strain ATCC 42720) (Yeast).